The primary structure comprises 339 residues: Deubiquitinase and deneddylase Dub2 (339 aa).

The chain crosses the membrane as a helical span at residues 36–56 (IIIALFLIVISCGLILCAYTF). Residues H203, D220, and C282 contribute to the active site.

The protein belongs to the peptidase C48 family.

Its subcellular location is the secreted. It localises to the host cell. It is found in the membrane. Functionally, effector proteins function to alter host cell physiology and promote bacterial survival in host tissues. This protease possesses deubiquitinating and deneddylating activities. The polypeptide is Deubiquitinase and deneddylase Dub2 (cdu2) (Chlamydia trachomatis serovar A (strain ATCC VR-571B / DSM 19440 / HAR-13)).